We begin with the raw amino-acid sequence, 82 residues long: Large ribosomal subunit protein eL14 (82 aa).

It belongs to the eukaryotic ribosomal protein eL14 family.

The chain is Large ribosomal subunit protein eL14 from Pyrococcus abyssi (strain GE5 / Orsay).